A 48-amino-acid chain; its full sequence is U-reduvitoxin-Pr5a (48 aa).

Positions 1–19 (MRLFLIFTFIVASLASVYG) are cleaved as a signal peptide. 3 cysteine pairs are disulfide-bonded: Cys20/Cys34, Cys27/Cys39, and Cys33/Cys44.

This sequence belongs to the venom Ptu1-like knottin family. Expressed by the venom gland.

Its subcellular location is the secreted. Functionally, binds reversibly and blocks P/Q-type voltage-gated calcium channels (Cav). The polypeptide is U-reduvitoxin-Pr5a (Platymeris rhadamanthus (Red spot assassin bug)).